Here is a 215-residue protein sequence, read N- to C-terminus: RWD domain-containing protein C1393.09c (215 aa).

Residues Glu-7 to Ile-114 form the RWD domain.

Its subcellular location is the cytoplasm. The protein localises to the nucleus. This is RWD domain-containing protein C1393.09c from Schizosaccharomyces pombe (strain 972 / ATCC 24843) (Fission yeast).